The following is a 476-amino-acid chain: Bifunctional protein HldE (476 aa).

Residues 1–319 (MKVSLPAFEK…EALALHHGES (319 aa)) form a ribokinase region. 195–198 (NMSE) is a binding site for ATP. D264 is a catalytic residue. The tract at residues 345-476 (MTNGCFDILH…AIIQNIMANQ (132 aa)) is cytidylyltransferase.

The protein in the N-terminal section; belongs to the carbohydrate kinase PfkB family. This sequence in the C-terminal section; belongs to the cytidylyltransferase family. Homodimer.

It carries out the reaction D-glycero-beta-D-manno-heptose 7-phosphate + ATP = D-glycero-beta-D-manno-heptose 1,7-bisphosphate + ADP + H(+). The catalysed reaction is D-glycero-beta-D-manno-heptose 1-phosphate + ATP + H(+) = ADP-D-glycero-beta-D-manno-heptose + diphosphate. The protein operates within nucleotide-sugar biosynthesis; ADP-L-glycero-beta-D-manno-heptose biosynthesis; ADP-L-glycero-beta-D-manno-heptose from D-glycero-beta-D-manno-heptose 7-phosphate: step 1/4. It functions in the pathway nucleotide-sugar biosynthesis; ADP-L-glycero-beta-D-manno-heptose biosynthesis; ADP-L-glycero-beta-D-manno-heptose from D-glycero-beta-D-manno-heptose 7-phosphate: step 3/4. Functionally, catalyzes the phosphorylation of D-glycero-D-manno-heptose 7-phosphate at the C-1 position to selectively form D-glycero-beta-D-manno-heptose-1,7-bisphosphate. Catalyzes the ADP transfer from ATP to D-glycero-beta-D-manno-heptose 1-phosphate, yielding ADP-D-glycero-beta-D-manno-heptose. The protein is Bifunctional protein HldE of Shewanella putrefaciens (strain CN-32 / ATCC BAA-453).